We begin with the raw amino-acid sequence, 423 residues long: Lysosomal acid phosphatase (423 aa).

A signal peptide spans 1-30 (MAGRRFGWSRAALLQLILGVNLMVMPRTQA). Over 31–380 (RTLRFVTLLY…QLAGGPADTE (350 aa)) the chain is Lumenal. The Nucleophile role is filled by histidine 42. Asparagine 92, asparagine 133, asparagine 167, asparagine 177, asparagine 191, and asparagine 267 each carry an N-linked (GlcNAc...) asparagine glycan. 3 disulfide bridges follow: cysteine 159/cysteine 370, cysteine 212/cysteine 310, and cysteine 345/cysteine 349. The active-site Proton donor is the aspartate 287. Asparagine 322 and asparagine 331 each carry an N-linked (GlcNAc...) asparagine glycan. Residues 381–401 (VIVALAVCGSILFLLIVLLLT) traverse the membrane as a helical segment. The Cytoplasmic portion of the chain corresponds to 402–423 (VLFRVQAQPPGYRHVPDGEDHA).

It belongs to the histidine acid phosphatase family. The membrane-bound form is converted to the soluble form by sequential proteolytic processing. First, the C-terminal cytoplasmic tail is removed. Cleavage by a lysosomal protease releases the soluble form in the lysosome lumen.

The protein resides in the lysosome membrane. It is found in the lysosome lumen. It catalyses the reaction a phosphate monoester + H2O = an alcohol + phosphate. This is Lysosomal acid phosphatase (ACP2) from Bos taurus (Bovine).